The chain runs to 35 residues: Sorbin and SH3 domain-containing protein 1 (35 aa).

Residues 1-8 (LNRDDDSD) enclose the SoHo domain. Serine 15 is modified (phosphoserine). The region spanning 22-35 (CDDGWFVGTSRRTK) is the SH3 domain.

In terms of assembly, interacts with the long isoform of AFDN and with VCL. AFDN and VCL bind to SORBS1 in a competitive manner and do not form a ternary complex. Interacts with ABL1, CBL, CBLB and INPPL1/SHIP2 through the third SH3 domain. Interaction with ABL1 occurs only after insulin stimulation while this has no effect on the interaction with INPPL1. Interacts with the insulin receptor but dissociates from it following insulin stimulation. Also interacts with SCA7, PTK2/FAK1 and flotillin. Interacts (via SH3 domain 2) with PXN. Interacts (via third SH3 domain) with the Ten-1 ICD form of TENM1; the interaction induces the translocation of SORBS1 to the nucleus. In terms of processing, O-glycosylated.

Its subcellular location is the cell junction. It is found in the adherens junction. The protein resides in the cell membrane. It localises to the cytoplasm. The protein localises to the cytoskeleton. Its subcellular location is the focal adhesion. It is found in the nucleus. The protein resides in the nucleus matrix. In terms of biological role, plays a role in tyrosine phosphorylation of CBL by linking CBL to the insulin receptor. Required for insulin-stimulated glucose transport. Involved in formation of actin stress fibers and focal adhesions. This Rattus norvegicus (Rat) protein is Sorbin and SH3 domain-containing protein 1.